Here is a 260-residue protein sequence, read N- to C-terminus: Methylthioribulose-1-phosphate dehydratase (260 aa).

The segment at 1–26 (MTPPTTGLPAENTTDDNDHLVQSDDP) is disordered. Over residues 16–26 (DNDHLVQSDDP) the composition is skewed to basic and acidic residues. A substrate-binding site is contributed by C109. 2 residues coordinate Zn(2+): H127 and H129. E154 functions as the Proton donor/acceptor in the catalytic mechanism. Position 211 (H211) interacts with Zn(2+).

Belongs to the aldolase class II family. MtnB subfamily. Zn(2+) is required as a cofactor.

It is found in the cytoplasm. It catalyses the reaction 5-(methylsulfanyl)-D-ribulose 1-phosphate = 5-methylsulfanyl-2,3-dioxopentyl phosphate + H2O. Its pathway is amino-acid biosynthesis; L-methionine biosynthesis via salvage pathway; L-methionine from S-methyl-5-thio-alpha-D-ribose 1-phosphate: step 2/6. Functionally, catalyzes the dehydration of methylthioribulose-1-phosphate (MTRu-1-P) into 2,3-diketo-5-methylthiopentyl-1-phosphate (DK-MTP-1-P). This Podospora anserina (strain S / ATCC MYA-4624 / DSM 980 / FGSC 10383) (Pleurage anserina) protein is Methylthioribulose-1-phosphate dehydratase.